The sequence spans 166 residues: Sperm-egg fusion protein TMEM95 (166 aa).

Residues 1–16 form the signal peptide; it reads MWTLALGGIFLAAVEA. Disulfide bonds link cysteine 17-cysteine 118, cysteine 20-cysteine 121, cysteine 105-cysteine 128, and cysteine 109-cysteine 134. Topologically, residues 17–145 are extracellular; sequence CVFCRFPDRE…PGSHDLWEAR (129 aa). N-linked (GlcNAc...) asparagine glycosylation is present at asparagine 117. The chain crosses the membrane as a helical span at residues 146–165; that stretch reads ILLLFVCGTALLLGVPSLAV. Position 166 (glutamate 166) is a topological domain, cytoplasmic.

This sequence belongs to the TMEM95 family. In terms of assembly, does not interact with sperm-egg fusion proteins IZUMO1 or IZUMO1R/JUNO. Post-translationally, N-glycosylated. In terms of tissue distribution, detected in testis and brain with higher levels in brain than testis.

It localises to the cytoplasmic vesicle. It is found in the secretory vesicle. The protein localises to the acrosome membrane. Its function is as follows. Sperm protein required for fusion of sperm with the egg membrane during fertilization. The polypeptide is Sperm-egg fusion protein TMEM95 (Bos taurus (Bovine)).